Here is a 328-residue protein sequence, read N- to C-terminus: Carbonic anhydrase-related protein 11 (328 aa).

The N-terminal stretch at 1-22 (MGAAARLSAPRALVLWAALGAA) is a signal peptide. The 271-residue stretch at 33-303 (DWWSYKDNLQ…LAHRALRGNR (271 aa)) folds into the Alpha-carbonic anhydrase domain. Residues Asn-118, Asn-170, and Asn-260 are each glycosylated (N-linked (GlcNAc...) asparagine). The tract at residues 300–328 (RGNRDPRHPERRCRGPNYRLHVDGAPHGR) is disordered. Residues 319–328 (LHVDGAPHGR) show a composition bias toward basic and acidic residues.

The protein belongs to the alpha-carbonic anhydrase family.

It localises to the secreted. Its function is as follows. Does not have a catalytic activity. The sequence is that of Carbonic anhydrase-related protein 11 (CA11) from Bos taurus (Bovine).